A 501-amino-acid polypeptide reads, in one-letter code: tRNA (guanine(37)-N(1))-methyltransferase (501 aa).

Residues His-282, 320–321, 348–349, and Asn-380 each bind S-adenosyl-L-methionine; these read DL and DG. The tract at residues 474 to 501 is disordered; sequence LQNDQEPPLKRQKTGDPFSGEPQIASDS.

The protein belongs to the class I-like SAM-binding methyltransferase superfamily. TRM5/TYW2 family. As to quaternary structure, monomer.

It is found in the mitochondrion matrix. Its subcellular location is the nucleus. The protein resides in the cytoplasm. The enzyme catalyses guanosine(37) in tRNA + S-adenosyl-L-methionine = N(1)-methylguanosine(37) in tRNA + S-adenosyl-L-homocysteine + H(+). Its function is as follows. Involved in mitochondrial tRNA methylation. Specifically methylates the N1 position of guanosine-37 in various tRNAs. Methylation is not dependent on the nature of the nucleoside 5' of the target nucleoside. This is the first step in the biosynthesis of wybutosine (yW), a modified base adjacent to the anticodon of tRNAs and required for accurate decoding. The protein is tRNA (guanine(37)-N(1))-methyltransferase (Trmt5) of Mus musculus (Mouse).